Here is a 97-residue protein sequence, read N- to C-terminus: Cell division topological specificity factor (97 aa).

The protein belongs to the MinE family.

Its function is as follows. Prevents the cell division inhibition by proteins MinC and MinD at internal division sites while permitting inhibition at polar sites. This ensures cell division at the proper site by restricting the formation of a division septum at the midpoint of the long axis of the cell. This chain is Cell division topological specificity factor, found in Rhodospirillum centenum (strain ATCC 51521 / SW).